Consider the following 2282-residue polypeptide: Cation channel sperm-associated targeting subunit tau (2282 aa).

A disordered region spans residues 1–118; it reads MELPPPGNRR…RGKGKGTGTR (118 aa). Composition is skewed to polar residues over residues 11 to 41 and 50 to 87; these read VSIN…SLKR and MMSN…NLSS. Over residues 90 to 109 the composition is skewed to basic and acidic residues; it reads YADEEGKPLTDKNKDKDKGR. The 136-residue stretch at 131-266 folds into the C2 domain; sequence QSDEMAIANQ…IQKGCFTEVM (136 aa). Disordered stretches follow at residues 397-416, 656-679, 747-1066, 1104-1153, 1217-1240, 1426-1445, 1452-1515, 1542-1569, 1908-1928, and 2187-2222; these read MTKR…SSAL, EHED…TWAE, NKLI…SHDP, SAKS…DKQS, YTND…TDDR, NSLL…DSRS, RQNT…SLDK, ERRQ…LEKT, NQAN…LKKQ, and PKKS…EPNK. Composition is skewed to polar residues over residues 750–760, 783–792, 800–841, 849–858, and 953–974; these read ITDSSFNTTKP, SDPSSNTTKP, DPSS…SDLN, IVSTISSDPN, and SARS…TKLS. Residues 1104-1123 show a composition bias toward low complexity; the sequence is SAKSLDSNNSSASSSPTVNS. Over residues 1124 to 1136 the composition is skewed to polar residues; it reads DTTTNAAEPSGTK. Composition is skewed to polar residues over residues 1452–1466 and 1473–1482; these read RQNT…SSVS and DCQSISTQES. Positions 1484–1493 are enriched in basic and acidic residues; sequence YPVRDTKSDS. Positions 1495-1504 are enriched in acidic residues; the sequence is NDTEEMELDS. Basic and acidic residues-rich tracts occupy residues 1542 to 1555 and 1916 to 1925; these read ERRQ…ESLI and SPERPSDISL.

As to quaternary structure, component of the CatSper complex or CatSpermasome composed of the core pore-forming members CATSPER1, CATSPER2, CATSPER3 and CATSPER4 as well as auxiliary members CATSPERB, CATSPERG, CATSPERD, CATSPERE, CATSPERZ, C2CD6/CATSPERT, SLCO6C1, TMEM249, TMEM262 and EFCAB9. HSPA1 may be an additional auxiliary complex member. The core complex members CATSPER1, CATSPER2, CATSPER3 and CATSPER4 form a heterotetrameric channel. The auxiliary CATSPERB, CATSPERG, CATSPERD and CATSPERE subunits form a pavilion-like structure over the pore which stabilizes the complex through interactions with CATSPER4, CATSPER3, CATSPER1 and CATSPER2 respectively. SLCO6C1 interacts with CATSPERE and TMEM262/CATSPERH interacts with CATSPERB, further stabilizing the complex. C2CD6/CATSPERT interacts at least with CATSPERD and is required for targeting the CatSper complex in the flagellar membrane. In terms of tissue distribution, expressed in cauda sperm (at protein level).

It is found in the cell projection. The protein resides in the cilium. Its subcellular location is the flagellum membrane. Auxiliary component of the CatSper complex, a complex involved in sperm cell hyperactivation. Sperm cell hyperactivation is needed for sperm motility which is essential late in the preparation of sperm for fertilization. Required for CatSper complex targeting and trafficking into the quadrilinear nanodomains. Targets the preassembled CatSper complexes to elongating flagella, where it links the channel-carrying vesicles and motor proteins. The polypeptide is Cation channel sperm-associated targeting subunit tau (Mus musculus (Mouse)).